We begin with the raw amino-acid sequence, 108 residues long: Thiosulfate sulfurtransferase GlpE (108 aa).

The 89-residue stretch at 17 to 105 (RQGAAVLVDI…WHRRFPANVA (89 aa)) folds into the Rhodanese domain. The Cysteine persulfide intermediate role is filled by C65.

The protein belongs to the GlpE family.

It localises to the cytoplasm. The enzyme catalyses thiosulfate + hydrogen cyanide = thiocyanate + sulfite + 2 H(+). It carries out the reaction thiosulfate + [thioredoxin]-dithiol = [thioredoxin]-disulfide + hydrogen sulfide + sulfite + 2 H(+). Functionally, transferase that catalyzes the transfer of sulfur from thiosulfate to thiophilic acceptors such as cyanide or dithiols. May function in a CysM-independent thiosulfate assimilation pathway by catalyzing the conversion of thiosulfate to sulfite, which can then be used for L-cysteine biosynthesis. This Salmonella agona (strain SL483) protein is Thiosulfate sulfurtransferase GlpE.